The chain runs to 585 residues: Glutamate decarboxylase 2 (585 aa).

Residues 1-24 are disordered; the sequence is MASPGSGFWSFGSEDGSADPENPG. Phosphoserine is present on residues Ser3, Ser6, Ser10, and Ser13. 2 S-palmitoyl cysteine lipidation sites follow: Cys30 and Cys45. 181 to 183 contributes to the substrate binding site; sequence QLS. An N6-(pyridoxal phosphate)lysine modification is found at Lys396. Arg558 contacts substrate.

Belongs to the group II decarboxylase family. Homodimer. Pyridoxal 5'-phosphate is required as a cofactor. In terms of processing, phosphorylated; which does not affect kinetic parameters or subcellular location. Palmitoylated; which is required for presynaptic clustering.

Its subcellular location is the cytoplasm. It localises to the cytosol. It is found in the cytoplasmic vesicle. The protein localises to the presynaptic cell membrane. The protein resides in the golgi apparatus membrane. The enzyme catalyses L-glutamate + H(+) = 4-aminobutanoate + CO2. Catalyzes the production of GABA. The sequence is that of Glutamate decarboxylase 2 (Gad2) from Mus musculus (Mouse).